A 150-amino-acid polypeptide reads, in one-letter code: Large ribosomal subunit protein bL9 (150 aa).

The protein belongs to the bacterial ribosomal protein bL9 family.

Functionally, binds to the 23S rRNA. This chain is Large ribosomal subunit protein bL9, found in Shewanella pealeana (strain ATCC 700345 / ANG-SQ1).